The following is a 364-amino-acid chain: DNA replication and repair protein RecF (364 aa).

Residue 30–37 (GNNAQGKT) participates in ATP binding.

Belongs to the RecF family.

Its subcellular location is the cytoplasm. In terms of biological role, the RecF protein is involved in DNA metabolism; it is required for DNA replication and normal SOS inducibility. RecF binds preferentially to single-stranded, linear DNA. It also seems to bind ATP. This chain is DNA replication and repair protein RecF, found in Clostridium botulinum (strain Okra / Type B1).